The sequence spans 1047 residues: Atrial natriuretic peptide receptor 2 (1047 aa).

The N-terminal stretch at 1-16 is a signal peptide; the sequence is MALPSLLLVVAALAGG. The Extracellular portion of the chain corresponds to 17–458; it reads VRPPGARNLT…DKTPLSTLAI (442 aa). N24 and N35 each carry an N-linked (GlcNAc...) asparagine glycan. C75 and C101 are joined by a disulfide. N-linked (GlcNAc...) asparagine glycosylation is found at N161, N195, N244, N277, and N349. A helical membrane pass occupies residues 459 to 478; the sequence is VALGTGITFIMFGVSSFLIF. The Cytoplasmic segment spans residues 479–1047; sequence RKLMLEKELA…GERKGPAGLL (569 aa). S513 carries the phosphoserine modification. A Protein kinase domain is found at 513–786; sequence SRLTLSLRGS…PDFGQIKGFI (274 aa). Phosphothreonine is present on T516. Residues S518, S522, S523, and S526 each carry the phosphoserine modification. T529 carries the phosphothreonine modification. The region spanning 861–991 is the Guanylate cyclase domain; the sequence is TIYFSDIVGF…DTVNTASRME (131 aa).

This sequence belongs to the adenylyl cyclase class-4/guanylyl cyclase family. In terms of processing, phosphorylated. Phosphorylation of the protein kinase-like domain is required for full activation by CNP. Post-translationally, glycosylated.

It is found in the cell membrane. The catalysed reaction is GTP = 3',5'-cyclic GMP + diphosphate. In terms of biological role, receptor for the C-type natriuretic peptide NPPC/CNP hormone. Has guanylate cyclase activity upon binding of its ligand. May play a role in the regulation of skeletal growth. The sequence is that of Atrial natriuretic peptide receptor 2 (NPR2) from Bos taurus (Bovine).